Reading from the N-terminus, the 230-residue chain is Triggering receptor expressed on myeloid cells 1 (230 aa).

Positions 1–20 (MRKAGLWGLLCVFFVSEVKA) are cleaved as a signal peptide. Residues 21–124 (AIVLEEERYD…IYHPPNDPVV (104 aa)) enclose the Ig-like V-type domain. Residues 21–202 (AIVLEEERYD…TDADSVSTSS (182 aa)) are Extracellular-facing. Cys-41 and Cys-113 are disulfide-bonded. The N-linked (GlcNAc...) asparagine glycan is linked to Asn-191. A helical membrane pass occupies residues 203 to 223 (VTISVICGLLSKSLVFIILFI). The Cytoplasmic portion of the chain corresponds to 224-230 (VTKRTFG).

As to quaternary structure, monomer. Homomultimer; when activated. Interacts with TYROBP/DAP12. Interacts with TLR4.

It localises to the cell membrane. Cell surface receptor that plays important roles in innate and adaptive immunity by amplifying inflammatory responses. Upon activation by various ligands such as PGLYRP1, HMGB1 or HSP70, multimerizes and forms a complex with transmembrane adapter TYROBP/DAP12. In turn, initiates a SYK-mediated cascade of tyrosine phosphorylation, activating multiple downstream mediators such as BTK, MAPK1, MAPK3 or phospholipase C-gamma. This cascade promotes the neutrophil- and macrophage-mediated release of pro-inflammatory cytokines and/or chemokines, as well as their migration and thereby amplifies inflammatory responses that are triggered by bacterial and fungal infections. By also promoting the amplification of inflammatory signals that are initially triggered by Toll-like receptor (TLR) and NOD-like receptor engagement, plays a major role in the pathophysiology of acute and chronic inflammatory diseases of different etiologies including septic shock and atherosclerosis. This Mus musculus (Mouse) protein is Triggering receptor expressed on myeloid cells 1 (Trem1).